The primary structure comprises 688 residues: Translation initiation factor IF-2 (688 aa).

The tract at residues 54 to 95 (KEKSEKTKEEDDEIETTAKNPIKESTNNKKPNKRDDKNEKVN) is disordered. Positions 86-95 (KRDDKNEKVN) are enriched in basic and acidic residues. The tr-type G domain maps to 187–354 (KRSPIITVMG…MILLSSEILE (168 aa)). Residues 196 to 203 (GHVDHGKT) are G1. GTP is bound at residue 196–203 (GHVDHGKT). The interval 221–225 (GITQH) is G2. The segment at 242–245 (DTPG) is G3. Residues 242–246 (DTPGH) and 296–299 (NKID) each bind GTP. The interval 296–299 (NKID) is G4. A G5 region spans residues 332–334 (SAH).

It belongs to the TRAFAC class translation factor GTPase superfamily. Classic translation factor GTPase family. IF-2 subfamily.

Its subcellular location is the cytoplasm. Functionally, one of the essential components for the initiation of protein synthesis. Protects formylmethionyl-tRNA from spontaneous hydrolysis and promotes its binding to the 30S ribosomal subunits. Also involved in the hydrolysis of GTP during the formation of the 70S ribosomal complex. The sequence is that of Translation initiation factor IF-2 from Clostridium botulinum (strain Okra / Type B1).